We begin with the raw amino-acid sequence, 336 residues long: Potassium channel subfamily K member 1 (336 aa).

The Cytoplasmic portion of the chain corresponds to 1–20 (MLQSLAGSSCVRLVERHRSA). A helical membrane pass occupies residues 21-41 (WCFGFLVLGYLLYLVFGAVVF). Residues 42–103 (SSVELPYEDL…SNASGNWNWD (62 aa)) lie on the Extracellular side of the membrane. The N-linked (GlcNAc...) asparagine glycan is linked to asparagine 95. The helical intramembrane region spans 104-116 (FTSALFFASTVLS). The stretch at 117–122 (TTGYGH) is an intramembrane region. The segment at 117-122 (TTGYGH) is selectivity filter 1. Residues 123 to 132 (TVPLSDGGKA) lie on the Extracellular side of the membrane. Residues 133 to 156 (FCIIYSVIGIPFTLLFLTAVVQRV) traverse the membrane as a helical segment. Topologically, residues 157–181 (TIHVTRRPVLYFHVRWGFSKQAVAI) are cytoplasmic. Residues 182-202 (VHAVLLGVVTVSCFFFIPAAV) traverse the membrane as a helical segment. Residues 203–211 (FSVLEDDWN) lie on the Extracellular side of the membrane. Residues 212–224 (FLESFYFCFISLS) constitute an intramembrane region (helical). The interval 225 to 230 (TIGLGD) is selectivity filter 2. The stretch at 225-231 (TIGLGDY) is an intramembrane region. Residues 232-243 (VPGEGYNQKFRE) lie on the Extracellular side of the membrane. Residues 244–267 (LYKIGITCYLLLGLIAMLVVLETF) traverse the membrane as a helical segment. At 268-336 (CELHELKKFR…PALADGASDH (69 aa)) the chain is on the cytoplasmic side. A Glycyl lysine isopeptide (Lys-Gly) (interchain with G-Cter in SUMO) cross-link involves residue lysine 274. Residues 293–299 (IIEHDQL) are important for intracellular retention in recycling endosomes. The disordered stretch occupies residues 307–336 (QAAGVQEDQKQNEPFVSPQPPALADGASDH).

This sequence belongs to the two pore domain potassium channel (TC 1.A.1.8) family. In terms of assembly, homodimer; disulfide-linked. Heterodimer with KCNK2; disulfide-linked. In astrocytes, forms mostly heterodimeric potassium channels with KCNK2, with only a minor proportion of functional channels containing homodimeric KCNK1. Interacts with KCNK3 and KCNK9, forming functional heterodimeric channels. Interacts with GNG4. Identified in a complex with PSD and ARF6; interacts only with PSD that is bound to ARF6. Interacts with UBE2I. Post-translationally, sumoylation is controversial. Sumoylated by UBE2I. Not sumoylated when expressed in xenopus oocytes or mammalian cells. Sumoylation inactivates the channel, but does not interfere with expression at the cell membrane. Sumoylation of a single subunit is sufficient to silence the dimeric channel. Sumoylation of KCNK1 is sufficient to silence heterodimeric channels formed by KCNK1 and KCNK3 or KCNK9. Desumoylated by SENP1; this activates the channel. Desumoylated by SENP1; this strongly increases halothane-mediated activation of heterodimeric channels formed with KCNK9. SENP1 treatment has no effect.

Its subcellular location is the cell membrane. The protein resides in the recycling endosome. It is found in the synaptic cell membrane. The protein localises to the cytoplasmic vesicle. It localises to the perikaryon. Its subcellular location is the cell projection. The protein resides in the dendrite. It is found in the apical cell membrane. The enzyme catalyses K(+)(in) = K(+)(out). It catalyses the reaction NH4(+)(in) = NH4(+)(out). It carries out the reaction Na(+)(in) = Na(+)(out). The catalysed reaction is Rb(+)(in) = Rb(+)(out). The enzyme catalyses Cs(+)(in) = Cs(+)(out). It catalyses the reaction Li(+)(in) = Li(+)(out). It carries out the reaction L-glutamate(out) = L-glutamate(in). The catalysed reaction is chloride(in) = chloride(out). Its function is as follows. Ion channel that contributes to passive transmembrane potassium transport and to the regulation of the resting membrane potential in brain astrocytes, but also in kidney and in other tissues. Forms dimeric channels through which potassium ions pass in accordance with their electrochemical gradient. The channel is selective for K(+) ions at physiological potassium concentrations and at neutral pH, but becomes permeable to Na(+) at subphysiological K(+) levels and upon acidification of the extracellular medium. The homodimer has very low potassium channel activity, when expressed in heterologous systems, and can function as weakly inward rectifying potassium channel. Channel activity is modulated by activation of serotonin receptors. Heterodimeric channels containing KCNK1 and KCNK2 have much higher activity, and may represent the predominant form in astrocytes. Heterodimeric channels containing KCNK1 and KCNK3 or KCNK9 have much higher activity. Heterodimeric channels formed by KCNK1 and KCNK9 may contribute to halothane-sensitive currents. Mediates outward rectifying potassium currents in dentate gyrus granule cells and contributes to the regulation of their resting membrane potential. Contributes to the regulation of action potential firing in dentate gyrus granule cells and down-regulates their intrinsic excitability. In astrocytes, the heterodimer formed by KCNK1 and KCNK2 is required for rapid glutamate release in response to activation of G-protein coupled receptors, such as F2R and CNR1. Required for normal ion and water transport in the kidney. Contributes to the regulation of the resting membrane potential of pancreatic beta cells. The low channel activity of homodimeric KCNK1 may be due to sumoylation. The low channel activity may be due to rapid internalization from the cell membrane and retention in recycling endosomes. Permeable to monovalent cations with ion selectivity for K(+) &gt; Rb(+) &gt;&gt; NH4(+) &gt;&gt; Cs(+) = Na(+) = Li(+). The polypeptide is Potassium channel subfamily K member 1 (Bos taurus (Bovine)).